We begin with the raw amino-acid sequence, 370 residues long: GTPase Obg (370 aa).

Positions 1 to 159 constitute an Obg domain; sequence MKFIDEARIE…RMLKLELKVL (159 aa). Residues 128–147 are disordered; the sequence is LHFKSSTNRAPRQKTDGKPG. Residues 160-334 enclose the OBG-type G domain; that stretch reads ADVGLLGMPN…LCYAIYDYLS (175 aa). Residues 166 to 173, 191 to 195, 213 to 216, 284 to 287, and 315 to 317 contribute to the GTP site; these read GMPNAGKS, FTTLA, DIPG, NKLD, and SAL. The Mg(2+) site is built by S173 and T193.

The protein belongs to the TRAFAC class OBG-HflX-like GTPase superfamily. OBG GTPase family. As to quaternary structure, monomer. Mg(2+) serves as cofactor.

It is found in the cytoplasm. An essential GTPase which binds GTP, GDP and possibly (p)ppGpp with moderate affinity, with high nucleotide exchange rates and a fairly low GTP hydrolysis rate. Plays a role in control of the cell cycle, stress response, ribosome biogenesis and in those bacteria that undergo differentiation, in morphogenesis control. In Burkholderia cenocepacia (strain ATCC BAA-245 / DSM 16553 / LMG 16656 / NCTC 13227 / J2315 / CF5610) (Burkholderia cepacia (strain J2315)), this protein is GTPase Obg.